Here is a 158-residue protein sequence, read N- to C-terminus: Cyclic pyranopterin monophosphate synthase (158 aa).

Substrate-binding positions include 75–77 and 113–114; these read LCH and ME. The active site involves D128.

Belongs to the MoaC family. Homohexamer; trimer of dimers.

The catalysed reaction is (8S)-3',8-cyclo-7,8-dihydroguanosine 5'-triphosphate = cyclic pyranopterin phosphate + diphosphate. It functions in the pathway cofactor biosynthesis; molybdopterin biosynthesis. Catalyzes the conversion of (8S)-3',8-cyclo-7,8-dihydroguanosine 5'-triphosphate to cyclic pyranopterin monophosphate (cPMP). The polypeptide is Cyclic pyranopterin monophosphate synthase (Pasteurella multocida (strain Pm70)).